Reading from the N-terminus, the 434-residue chain is F-box only protein 15 (434 aa).

The F-box domain occupies 1–41 (MPSEILLKIFSYLDAVSLLCAGCVSRRFYHLANDNFIWIRI).

As to quaternary structure, directly interacts with SKP1 and CUL1.

Functionally, substrate-recognition component of the SCF (SKP1-CUL1-F-box protein)-type E3 ubiquitin ligase complex. The sequence is that of F-box only protein 15 (FBXO15) from Macaca fascicularis (Crab-eating macaque).